The sequence spans 118 residues: Protein TusC (118 aa).

The protein belongs to the DsrF/TusC family. As to quaternary structure, heterohexamer, formed by a dimer of trimers. The hexameric TusBCD complex contains 2 copies each of TusB, TusC and TusD. The TusBCD complex interacts with TusE.

The protein resides in the cytoplasm. In terms of biological role, part of a sulfur-relay system required for 2-thiolation of 5-methylaminomethyl-2-thiouridine (mnm(5)s(2)U) at tRNA wobble positions. This is Protein TusC from Salmonella gallinarum (strain 287/91 / NCTC 13346).